The primary structure comprises 418 residues: F-box protein At1g10780 (418 aa).

Residues 1–47 (MDSLPDAILQYILSYLTSARDVAACNCVSKRWKESTDSVKSVVFHRN) enclose the F-box domain.

This Arabidopsis thaliana (Mouse-ear cress) protein is F-box protein At1g10780.